The primary structure comprises 453 residues: MSGFNGTSTSSNSILSERQKDELHKSILDYFKTNNLHESFATLMREANQEGFVPDPRAKYAGLLEKKWTSVIRLQKKIMEMESRISQLQEELSAAPSAKRSASLNDWLPAASSARHTMQGHRLPVTKVSFHPVFSQIASASEDTTVKLWDWETGDFERTLKGHTKAVQDVDFDSKGNYVLSCSSDLSIKVWDANNDYKNIKTLQGHDHSVSSVRFLPGDDYIVSASRDKTIKIWEFSTGFCTKTLQGHAEWVRSAIPSDDAKWLVSCSTDQTARVWDVSSGETKVELRGHEHVVEVAIFAPVASYAAIRQLASLDPNASKDASASMAGQFVATGSRDKTIRIWDSISGQCLKTLTGHDNWVRGLAFSPNGKSLLSVSDDKTMRLWDLQSGRCTRTIEAHQHFATGIAWGKAKIEAPIPPAQDGEEAGRKQPEARTVNVVATSSVDLTIKIWTP.

In terms of domain architecture, LisH spans Gln-19–Gly-51. Residues Thr-69 to Pro-96 adopt a coiled-coil conformation. WD repeat units follow at residues Gly-120 to Lys-161, Gly-162 to Lys-201, Gly-205 to Thr-244, Gly-247 to Glu-286, Leu-314 to Thr-355, Gly-356 to Thr-395, and Ile-413 to Thr-452.

It belongs to the WD repeat LIS1/nudF family. In terms of assembly, self-associates. Interacts with NDL1 and dynein.

It is found in the cytoplasm. The protein resides in the cytoskeleton. The protein localises to the spindle pole. Positively regulates the activity of the minus-end directed microtubule motor protein dynein. May enhance dynein-mediated microtubule sliding by targeting dynein to the microtubule plus end. Required for nuclear migration during vegetative growth as well as development. Required for localization of dynein to the mitotic spindle poles. Recruits additional proteins to the dynein complex at SPBs. Required for retrograde early endosome (EE) transport from the hyphal tip. The protein is Nuclear distribution protein PAC1 of Mycosarcoma maydis (Corn smut fungus).